The sequence spans 268 residues: Short chain dehydrogenase/reductase dpchG (268 aa).

Residues valine 18, aspartate 70, asparagine 97, lysine 131, tyrosine 165, and lysine 169 each contribute to the NADP(+) site. Tyrosine 165 acts as the Proton acceptor in catalysis. Catalysis depends on lysine 169, which acts as the Lowers pKa of active site Tyr.

The protein belongs to the short-chain dehydrogenases/reductases (SDR) family.

Its pathway is secondary metabolite biosynthesis; terpenoid biosynthesis. In terms of biological role, short chain dehydrogenase/reductase; part of the gene cluster that mediates the biosynthesis of the diterpenoid pyrones higginsianins A and B. The first step of the pathway is the synthesis of the alpha-pyrone moiety by the polyketide synthase dpchA via condensation of one acetyl-CoA starter unit with 3 malonyl-CoA units and 2 methylations. The alpha-pyrone is then combined with geranylgeranyl pyrophosphate (GGPP) formed by the GGPP synthase dpchD through the action of the prenyltransferase dpchC to yield a linear alpha-pyrone diterpenoid. Subsequent steps in the diterpenoid pyrone biosynthetic pathway involve the decalin core formation, which is initiated by the epoxidation of the C10-C11 olefin by the FAD-dependent oxidoreductase dpchE, and is followed by a cyclization cascade catalyzed by the terpene cyclase dpchB. The short chain dehydrogenase/reductase dpchG then oxidizes the 8S hydroxy group to a ketone and the short chain dehydrogenase/reductase dpchH reduces the ketone to the 8R hydroxy group to yield higginsianin B. Finally, the FAD-dependent oxidoreductase dpchF converts higginsianin B into higginsianin A. The protein is Short chain dehydrogenase/reductase dpchG of Colletotrichum higginsianum (strain IMI 349063) (Crucifer anthracnose fungus).